The following is a 301-amino-acid chain: Inosose dehydratase (301 aa).

Belongs to the IolE/MocC family. It depends on glutathione as a cofactor. Co(2+) serves as cofactor. Requires Mn(2+) as cofactor.

It catalyses the reaction scyllo-inosose = 3D-3,5/4-trihydroxycyclohexane-1,2-dione + H2O. The protein operates within polyol metabolism; myo-inositol degradation into acetyl-CoA; acetyl-CoA from myo-inositol: step 2/7. Its function is as follows. Catalyzes the dehydration of inosose (2-keto-myo-inositol, 2KMI or 2,4,6/3,5-pentahydroxycyclohexanone) to 3D-(3,5/4)-trihydroxycyclohexane-1,2-dione (D-2,3-diketo-4-deoxy-epi-inositol). This chain is Inosose dehydratase, found in Lacticaseibacillus casei (strain BL23) (Lactobacillus casei).